We begin with the raw amino-acid sequence, 1227 residues long: Codanin-1 (1227 aa).

The residue at position 2 (Ala2) is an N-acetylalanine. Residues 63–294 (RVLPQGPPTP…SLTDEPADPA (232 aa)) form a disordered region. Residue Thr71 is modified to Phosphothreonine. Residues 128–137 (ARERGGRGLE) are compositionally biased toward basic and acidic residues. Over residues 155–167 (GSGSPSRPSLTLS) the composition is skewed to low complexity. Residues 188–208 (PTGTKPSRRINPTPVSEERSL) form an interaction with ASF1A/B region. Residues 214 to 232 (CFTSPPISCVPSSQPSALD) show a composition bias toward polar residues. Basic and acidic residues predominate over residues 247–260 (LQEEREMLRKERSK). Phosphoserine is present on residues Ser265 and Ser285. The next 2 membrane-spanning stretches (helical) occupy residues 312-332 (CIAE…FQLL) and 626-646 (FAVV…VAFL).

Found in a cytosolic complex with ASF1A, ASF1B, IPO4 and histones H3.1 and H4. In terms of tissue distribution, ubiquitously expressed. Isoform 3 is not found in erythroid cells.

The protein resides in the cytoplasm. It is found in the nucleus. Its subcellular location is the membrane. May act as a negative regulator of ASF1 in chromatin assembly. The polypeptide is Codanin-1 (CDAN1) (Homo sapiens (Human)).